The sequence spans 381 residues: ELMO domain-containing protein 3 (381 aa).

The interval 1 to 31 (MNEKSCSFHSKEELRDGQGERLSAGYSPSYD) is disordered. Basic and acidic residues predominate over residues 9 to 19 (HSKEELRDGQG). The 155-residue stretch at 170 to 324 (VHGRVLQTIY…ELEVLAKKSP (155 aa)) folds into the ELMO domain.

In terms of tissue distribution, both isoform 1 and isoform 6 are widely expressed.

Its subcellular location is the cell projection. It is found in the stereocilium. The protein resides in the kinocilium. It localises to the cytoplasm. The protein localises to the cytoskeleton. Functionally, acts as a GTPase-activating protein (GAP) for ARL2 with low specific activity. The polypeptide is ELMO domain-containing protein 3 (ELMOD3) (Homo sapiens (Human)).